We begin with the raw amino-acid sequence, 504 residues long: Glycerol kinase (504 aa).

Residue Thr14 coordinates ADP. 3 residues coordinate ATP: Thr14, Thr15, and Ser16. Thr14 contacts sn-glycerol 3-phosphate. An ADP-binding site is contributed by Arg18. Positions 84, 85, 136, and 246 each coordinate sn-glycerol 3-phosphate. Glycerol-binding residues include Arg84, Glu85, Tyr136, Asp246, and Gln247. Positions 268 and 311 each coordinate ADP. ATP-binding residues include Thr268, Gly311, Gln315, and Gly412. The ADP site is built by Gly412 and Asn416.

Belongs to the FGGY kinase family.

The catalysed reaction is glycerol + ATP = sn-glycerol 3-phosphate + ADP + H(+). It functions in the pathway polyol metabolism; glycerol degradation via glycerol kinase pathway; sn-glycerol 3-phosphate from glycerol: step 1/1. Its activity is regulated as follows. Inhibited by fructose 1,6-bisphosphate (FBP). Its function is as follows. Key enzyme in the regulation of glycerol uptake and metabolism. Catalyzes the phosphorylation of glycerol to yield sn-glycerol 3-phosphate. In Aliivibrio fischeri (strain MJ11) (Vibrio fischeri), this protein is Glycerol kinase.